The chain runs to 236 residues: LexA repressor (236 aa).

The disordered stretch occupies residues 1-25 (MNDSNDTSVAGGAAGADSRVLSADS). A DNA-binding region (H-T-H motif) is located at residues 51–71 (IREIGDAVGLTSTSSVAHQLR). Catalysis depends on for autocatalytic cleavage activity residues Ser-160 and Lys-197.

The protein belongs to the peptidase S24 family. In terms of assembly, homodimer.

The catalysed reaction is Hydrolysis of Ala-|-Gly bond in repressor LexA.. Its function is as follows. Represses a number of genes involved in the response to DNA damage (SOS response), including recA and lexA. In the presence of single-stranded DNA, RecA interacts with LexA causing an autocatalytic cleavage which disrupts the DNA-binding part of LexA, leading to derepression of the SOS regulon and eventually DNA repair. The sequence is that of LexA repressor from Mycobacterium bovis (strain BCG / Pasteur 1173P2).